Here is a 715-residue protein sequence, read N- to C-terminus: Serrate RNA effector molecule homolog (715 aa).

3 disordered regions span residues 1 to 87 (MDSD…YSGP), 223 to 259 (ENKD…TDKA), and 629 to 715 (EPKH…DDIP). Basic and acidic residues-rich tracts occupy residues 7–25 (GDRR…DSYR), 37–57 (YDNK…SRGD), and 223–242 (ENKD…VKEE). Acidic residues predominate over residues 243–256 (PNEEQEEGAIDDET). A compositionally biased stretch (basic and acidic residues) spans 629-659 (EPKHMPHMSRDDHRGGGGDRGYGRERDDDRG).

This sequence belongs to the ARS2 family.

The protein resides in the nucleus. Its function is as follows. Acts as a mediator between the cap-binding complex (CBC) and the primary microRNAs (miRNAs) processing machinery. Contributes to the stability and delivery of capped primary miRNA transcripts to the primary miRNA processing complex, thereby playing a role in RNA-mediated gene silencing (RNAi) by miRNAs. The polypeptide is Serrate RNA effector molecule homolog (Caenorhabditis briggsae).